The following is a 780-amino-acid chain: Aconitate hydratase, mitochondrial (780 aa).

A mitochondrion-targeting transit peptide spans 1–27; sequence MAPYSLLVSRLQKALGARQYHVASVLC. The residue at position 31 (Lys31) is an N6-succinyllysine. An N6-acetyllysine; alternate modification is found at Lys50. Lys50 is modified (N6-succinyllysine; alternate). Gln99 provides a ligand contact to substrate. N6-acetyllysine; alternate is present on residues Lys138 and Lys144. 2 positions are modified to N6-succinyllysine; alternate: Lys138 and Lys144. 192 to 194 lines the substrate pocket; sequence DSH. The residue at position 233 (Lys233) is an N6-acetyllysine; alternate. Lys233 bears the N6-succinyllysine; alternate mark. Cys385 contacts [4Fe-4S] cluster. An N6-succinyllysine modification is found at Lys411. 2 residues coordinate [4Fe-4S] cluster: Cys448 and Cys451. Positions 474 and 479 each coordinate substrate. An N6-acetyllysine; alternate mark is found at Lys517 and Lys523. N6-succinyllysine; alternate occurs at positions 517 and 523. Residues 524–537 are compositionally biased toward basic and acidic residues; that stretch reads LEAPDADELPRAEF. The tract at residues 524-560 is disordered; the sequence is LEAPDADELPRAEFDPGQDTYQHPPKDSSGQQVDVSP. An N6-succinyllysine modification is found at Lys549. Positions 551–560 are enriched in polar residues; sequence SSGQQVDVSP. Residue Ser559 is modified to Phosphoserine. Residue Lys573 is modified to N6-acetyllysine; alternate. Lys573 carries the post-translational modification N6-succinyllysine; alternate. N6-succinyllysine is present on Lys591. Lys605 bears the N6-acetyllysine; alternate mark. An N6-succinyllysine; alternate modification is found at Lys605. Arg607 lines the substrate pocket. Lys628 bears the N6-succinyllysine mark. Ser670 carries the post-translational modification Phosphoserine. 670–671 is a binding site for substrate; that stretch reads SR. At Lys689 the chain carries N6-succinyllysine. Residues Lys723 and Lys730 each carry the N6-acetyllysine; alternate modification. 2 positions are modified to N6-succinyllysine; alternate: Lys723 and Lys730. Residues Lys736 and Lys743 each carry the N6-acetyllysine modification.

The protein belongs to the aconitase/IPM isomerase family. Monomer. [4Fe-4S] cluster serves as cofactor. Post-translationally, forms covalent cross-links mediated by transglutaminase TGM2, between a glutamine and the epsilon-amino group of a lysine residue, forming homopolymers and heteropolymers.

It is found in the mitochondrion. It catalyses the reaction citrate = D-threo-isocitrate. Its pathway is carbohydrate metabolism; tricarboxylic acid cycle; isocitrate from oxaloacetate: step 2/2. Functionally, catalyzes the isomerization of citrate to isocitrate via cis-aconitate. This is Aconitate hydratase, mitochondrial (ACO2) from Bos taurus (Bovine).